A 297-amino-acid polypeptide reads, in one-letter code: T-cell leukemia homeobox protein 3 (297 aa).

Positions 1–68 are disordered; the sequence is MEPAAGAQGP…LGGPRGGAPY (68 aa). Residues 32–52 are compositionally biased toward pro residues; it reads APPPPPPPPPPPPPPPPPPRG. Positions 172–231 form a DNA-binding region, homeobox; that stretch reads RKKPRTSFSRVQICELEKRFHRQKYLASAERAALAKSLKMTDAQVKTWFQNRRTKWRRQT.

In terms of tissue distribution, expression is restricted to neurons in the peripheral and central nervous system.

It localises to the nucleus. Functionally, seems to be involved in the development of cranial sensory innervation from peripheral ganglia. This Gallus gallus (Chicken) protein is T-cell leukemia homeobox protein 3 (TLX3).